The following is a 473-amino-acid chain: Ribulose bisphosphate carboxylase large chain (473 aa).

Substrate-binding residues include N116 and T166. K168 acts as the Proton acceptor in catalysis. Substrate is bound at residue K170. Residues K194, D196, and E197 each contribute to the Mg(2+) site. K194 bears the N6-carboxylysine mark. H287 (proton acceptor) is an active-site residue. Substrate is bound by residues R288, H320, and S372.

Belongs to the RuBisCO large chain family. Type I subfamily. As to quaternary structure, heterohexadecamer of 8 large chains and 8 small chains. Mg(2+) serves as cofactor.

It catalyses the reaction 2 (2R)-3-phosphoglycerate + 2 H(+) = D-ribulose 1,5-bisphosphate + CO2 + H2O. It carries out the reaction D-ribulose 1,5-bisphosphate + O2 = 2-phosphoglycolate + (2R)-3-phosphoglycerate + 2 H(+). RuBisCO catalyzes two reactions: the carboxylation of D-ribulose 1,5-bisphosphate, the primary event in carbon dioxide fixation, as well as the oxidative fragmentation of the pentose substrate. Both reactions occur simultaneously and in competition at the same active site. The sequence is that of Ribulose bisphosphate carboxylase large chain from Nitrosomonas europaea (strain ATCC 19718 / CIP 103999 / KCTC 2705 / NBRC 14298).